Consider the following 576-residue polypeptide: Arginine--tRNA ligase (576 aa).

The short motif at 122-132 is the 'HIGH' region element; it reads PNVAKQMHVGH.

It belongs to the class-I aminoacyl-tRNA synthetase family. In terms of assembly, monomer.

It is found in the cytoplasm. The catalysed reaction is tRNA(Arg) + L-arginine + ATP = L-arginyl-tRNA(Arg) + AMP + diphosphate. This is Arginine--tRNA ligase from Photorhabdus laumondii subsp. laumondii (strain DSM 15139 / CIP 105565 / TT01) (Photorhabdus luminescens subsp. laumondii).